The following is a 308-amino-acid chain: Ribosomal RNA small subunit methyltransferase H (308 aa).

Residues 38-40, aspartate 58, phenylalanine 82, aspartate 99, and glutamine 106 contribute to the S-adenosyl-L-methionine site; that span reads GGH.

Belongs to the methyltransferase superfamily. RsmH family.

Its subcellular location is the cytoplasm. The enzyme catalyses cytidine(1402) in 16S rRNA + S-adenosyl-L-methionine = N(4)-methylcytidine(1402) in 16S rRNA + S-adenosyl-L-homocysteine + H(+). In terms of biological role, specifically methylates the N4 position of cytidine in position 1402 (C1402) of 16S rRNA. In Acidovorax ebreus (strain TPSY) (Diaphorobacter sp. (strain TPSY)), this protein is Ribosomal RNA small subunit methyltransferase H.